Consider the following 355-residue polypeptide: Phosphoserine aminotransferase (355 aa).

Residue arginine 41 coordinates L-glutamate. Pyridoxal 5'-phosphate is bound by residues alanine 75–serine 76, tryptophan 99, threonine 147, aspartate 166, and glutamine 189. The residue at position 190 (lysine 190) is an N6-(pyridoxal phosphate)lysine. Asparagine 231–threonine 232 provides a ligand contact to pyridoxal 5'-phosphate.

Belongs to the class-V pyridoxal-phosphate-dependent aminotransferase family. SerC subfamily. Homodimer. Requires pyridoxal 5'-phosphate as cofactor.

The protein resides in the cytoplasm. It carries out the reaction O-phospho-L-serine + 2-oxoglutarate = 3-phosphooxypyruvate + L-glutamate. The catalysed reaction is 4-(phosphooxy)-L-threonine + 2-oxoglutarate = (R)-3-hydroxy-2-oxo-4-phosphooxybutanoate + L-glutamate. It participates in amino-acid biosynthesis; L-serine biosynthesis; L-serine from 3-phospho-D-glycerate: step 2/3. It functions in the pathway cofactor biosynthesis; pyridoxine 5'-phosphate biosynthesis; pyridoxine 5'-phosphate from D-erythrose 4-phosphate: step 3/5. In terms of biological role, catalyzes the reversible conversion of 3-phosphohydroxypyruvate to phosphoserine and of 3-hydroxy-2-oxo-4-phosphonooxybutanoate to phosphohydroxythreonine. This is Phosphoserine aminotransferase from Bacteroides fragilis (strain ATCC 25285 / DSM 2151 / CCUG 4856 / JCM 11019 / LMG 10263 / NCTC 9343 / Onslow / VPI 2553 / EN-2).